Here is a 382-residue protein sequence, read N- to C-terminus: GDP-mannose-dependent alpha-(1-6)-phosphatidylinositol monomannoside mannosyltransferase (382 aa).

Positions 200, 205, 257, and 294 each coordinate GDP-alpha-D-mannose.

Belongs to the glycosyltransferase group 1 family. Glycosyltransferase 4 subfamily.

It catalyses the reaction a 1,2-diacyl-sn-glycero-3-phospho-[alpha-D-mannopyranosyl-(1&lt;-&gt;6)-D-myo-inositol] + GDP-alpha-D-mannose = a 2,6-O-bis(alpha-D-mannopyranosyl)-1-phosphatidyl-1D-myo-inositol + GDP + H(+). The enzyme catalyses a 1,2-diacyl-sn-glycero-3-phospho-[alpha-D-6-acyl-mannopyranosyl-(1&lt;-&gt;6)-D-myo-inositol] + GDP-alpha-D-mannose = a 2-O-(alpha-D-mannosyl)-6-O-(6-O-acyl-alpha-D-mannosyl)-1-phosphatidyl-1D-myo-inositol + GDP + H(+). Its pathway is phospholipid metabolism; phosphatidylinositol metabolism. Involved in the biosynthesis of phosphatidyl-myo-inositol mannosides (PIM) which are early precursors in the biosynthesis of lipomannans (LM) and lipoarabinomannans (LAM). Catalyzes the addition of a mannosyl residue from GDP-D-mannose (GDP-Man) to the position 6 of a phosphatidyl-myo-inositol bearing an alpha-1,2-linked mannose residue (PIM1) to generate phosphatidyl-myo-inositol bearing alpha-1,2- and alpha-1,6-linked mannose residues (Ac1PIM2). PimB also catalyzes the addition of a mannosyl residue from GDP-Man to the position 6 of phosphatidyl-myo-inositol bearing an acylated alpha-1,2-linked mannose residue (Ac1PIM1) to generate monoacylated phosphatidyl-myo-inositol bearing alpha-1,2- and alpha-1,6-linked mannose residues (Ac1PIM2). The addition of the second mannosyl residue by PimB preferentially occurs before the acylation of the mannosyl residue transferred by PimA. Also able to transfer a mannosyl residue from GDP-Man to the position 6 of a phosphatidyl-myo-inositol (PI), but this reaction is very slow. In Mycolicibacterium smegmatis (strain ATCC 700084 / mc(2)155) (Mycobacterium smegmatis), this protein is GDP-mannose-dependent alpha-(1-6)-phosphatidylinositol monomannoside mannosyltransferase.